We begin with the raw amino-acid sequence, 606 residues long: Endonuclease 8-like 3 (606 aa).

The Schiff-base intermediate with DNA; via amino nitrogen role is filled by V2. N193 and R272 together coordinate DNA. The FPG-type zinc finger occupies 248 to 282 (KVYKRPNCDQCHSKITVCRFGENSRMTYFCPHCQK). The segment at 318 to 347 (SEEQWSCVVCTLINRPSAKACDACLTTRPL) adopts a RanBP2-type zinc-finger fold. At S451 the chain carries Phosphoserine. Positions 479–494 (KSYNSGLSNSELQTNR) are enriched in polar residues. A disordered region spans residues 479–506 (KSYNSGLSNSELQTNRTRGHHSKSDGSP). Zn(2+) contacts are provided by C508, H511, C534, C542, C555, H557, C580, and C588. GRF-type zinc fingers lie at residues 508–551 (CKMH…ADLS) and 555–597 (CRHG…AENG).

Belongs to the FPG family. As to expression, expressed in testis, thymus, spleen and bone marrow. In young mice, expressed at higher levels in thymocytes than splenocytes. At 12 dpc, abundant in the subventricular zone (SVZ) of the lateral ventricles. At 17.5 dpc and P0, expression is limited to distinct cells in the cortical SVZ, in cells of the secondary matrix, the dentate gyrus migratory route and the dentate gyrus.

The protein localises to the nucleus. The protein resides in the chromosome. The catalysed reaction is 2'-deoxyribonucleotide-(2'-deoxyribose 5'-phosphate)-2'-deoxyribonucleotide-DNA = a 3'-end 2'-deoxyribonucleotide-(2,3-dehydro-2,3-deoxyribose 5'-phosphate)-DNA + a 5'-end 5'-phospho-2'-deoxyribonucleoside-DNA + H(+). In terms of biological role, DNA glycosylase which prefers single-stranded DNA (ssDNA), or partially ssDNA structures such as bubble and fork structures, to double-stranded DNA (dsDNA). Mediates interstrand cross-link repair in response to replication stress: acts by mediating DNA glycosylase activity, cleaving one of the two N-glycosyl bonds comprising the interstrand cross-link, which avoids the formation of a double-strand break but generates an abasic site that is bypassed by translesion synthesis polymerases. In vitro, displays strong glycosylase activity towards the hydantoin lesions spiroiminodihydantoin (Sp) and guanidinohydantoin (Gh) in both ssDNA and dsDNA; also recognizes FapyA, FapyG, 5-OHU, 5-OHC, 5-OHMH, Tg and 8-oxoA lesions in ssDNA. No activity on 8-oxoG detected. Also shows weak DNA-(apurinic or apyrimidinic site) lyase activity. In vivo, appears to be the primary enzyme involved in removing Sp and Gh from ssDNA in neonatal tissues. The sequence is that of Endonuclease 8-like 3 (Neil3) from Mus musculus (Mouse).